Consider the following 487-residue polypeptide: Solute carrier family 22 member 15-like (487 aa).

A helical membrane pass occupies residues 23–43 (FLTLLQIYVACQSMLIVLVGA). N70 carries an N-linked (GlcNAc...) asparagine glycan. 11 helical membrane-spanning segments follow: residues 90 to 110 (LASS…GPLS), 117 to 137 (PVYL…ALAP), 141 to 161 (VFAV…LVSF), 178 to 198 (SLTN…GFYI), 203 to 223 (TLAF…FVLP), 286 to 306 (ILLM…TLNA), 315 to 335 (LNVA…LYFI), 345 to 365 (ATAG…FVPE), 374 to 394 (TVLA…VYIY), 408 to 428 (LGVC…IPAM), and 435 to 455 (MPFV…LLLP).

Belongs to the major facilitator (TC 2.A.1) superfamily. Organic cation transporter (TC 2.A.1.19) family.

The protein localises to the membrane. Its function is as follows. Probably transports organic cations. This Xenopus laevis (African clawed frog) protein is Solute carrier family 22 member 15-like (slc22a15b).